Here is a 95-residue protein sequence, read N- to C-terminus: Leukocyte-specific transcript 1 protein (95 aa).

Residues 22–42 (LGLGGLLLLLVIILFICLCGF) traverse the membrane as a helical segment. The residue at position 64 (Ser-64) is a Phosphoserine.

This sequence belongs to the LST1 family. In terms of tissue distribution, expressed in spleen and at lower levels in thymus and liver.

The protein localises to the membrane. Functionally, possible role in modulating immune responses. Has an inhibitory effect on lymphocyte proliferation. Induces morphological changes including production of filopodia and microspikes when overexpressed in a variety of cell types and may be involved in dendritic cell maturation. This Mus musculus (Mouse) protein is Leukocyte-specific transcript 1 protein (Lst1).